The chain runs to 271 residues: Bifunctional protein FolD (271 aa).

NADP(+) contacts are provided by residues 154 to 156, Thr-181, and Ile-222; that span reads GRS.

The protein belongs to the tetrahydrofolate dehydrogenase/cyclohydrolase family. In terms of assembly, homodimer.

The catalysed reaction is (6R)-5,10-methylene-5,6,7,8-tetrahydrofolate + NADP(+) = (6R)-5,10-methenyltetrahydrofolate + NADPH. The enzyme catalyses (6R)-5,10-methenyltetrahydrofolate + H2O = (6R)-10-formyltetrahydrofolate + H(+). It functions in the pathway one-carbon metabolism; tetrahydrofolate interconversion. Catalyzes the oxidation of 5,10-methylenetetrahydrofolate to 5,10-methenyltetrahydrofolate and then the hydrolysis of 5,10-methenyltetrahydrofolate to 10-formyltetrahydrofolate. The polypeptide is Bifunctional protein FolD (Thermosipho africanus (strain TCF52B)).